Here is a 286-residue protein sequence, read N- to C-terminus: Shikimate dehydrogenase (NADP(+)) (286 aa).

Residues 22-24 and threonine 69 each bind shikimate; that span reads SLS. Lysine 73 serves as the catalytic Proton acceptor. NADP(+) is bound at residue glutamate 85. The shikimate site is built by asparagine 94 and aspartate 109. NADP(+) contacts are provided by residues 133-137 and valine 231; that span reads GAGGA. Tyrosine 233 serves as a coordination point for shikimate. Position 254 (glycine 254) interacts with NADP(+).

The protein belongs to the shikimate dehydrogenase family. In terms of assembly, homodimer.

It catalyses the reaction shikimate + NADP(+) = 3-dehydroshikimate + NADPH + H(+). Its pathway is metabolic intermediate biosynthesis; chorismate biosynthesis; chorismate from D-erythrose 4-phosphate and phosphoenolpyruvate: step 4/7. Involved in the biosynthesis of the chorismate, which leads to the biosynthesis of aromatic amino acids. Catalyzes the reversible NADPH linked reduction of 3-dehydroshikimate (DHSA) to yield shikimate (SA). The polypeptide is Shikimate dehydrogenase (NADP(+)) (Alkaliphilus metalliredigens (strain QYMF)).